Consider the following 92-residue polypeptide: MPKLEMMLLVLLILPLSSFSAAGEQVVQGDRRSDGLARYLQRGGRDVQECQVVTPGSKWGRCCLNRVCGPMCCPASHCYCIYHRGKGHGCSC.

The signal sequence occupies residues 1–24 (MPKLEMMLLVLLILPLSSFSAAGE). Residues 25-45 (QVVQGDRRSDGLARYLQRGGR) constitute a propeptide that is removed on maturation. 4-carboxyglutamate is present on E49. P55 bears the 4-hydroxyproline mark. Cystine bridges form between C63–C72, C68–C80, C73–C90, and C78–C92.

Belongs to the conotoxin D superfamily. Hetero-, homo- or pseudo-homodimer (identical sequence, different post-translational modifications). One pseudo-homodimer of [carboxyGlu-49, hydroxyPro-55]Ml20.1 and [carboxyGlu-49, hydroxyPro-55, hydroxyPro-70]Ml20.1 may exist. As to expression, expressed by the venom duct.

It localises to the secreted. Alpha-conotoxins act on postsynaptic membranes, they bind to the nicotinic acetylcholine receptors (nAChR) and thus inhibit them. Through its two C-terminal domains, this homodimeric protein would bind to two nAChR allosteric sites, located outside the nAChR C-loop of the principal binding face and at the adjacent binding interface in a clockwise direction. This toxin specifically blocks mammalian neuronal nAChR of the alpha-7/CHRNA7, alpha-3-beta-2/CHRNA3-CHRNB2 and alpha-4-beta-2/CHRNA4-CHRNB2 subtypes. This chain is Alpha-conotoxin-like Mi20.1, found in Conus miles (Soldier cone).